Here is a 274-residue protein sequence, read N- to C-terminus: Shikimate dehydrogenase (NADP(+)) (274 aa).

Shikimate contacts are provided by residues 14–16 (SLS) and Thr-61. Residue Lys-65 is the Proton acceptor of the active site. Shikimate-binding residues include Asn-85 and Asp-106. NADP(+) is bound by residues 130 to 134 (GAGGA), 153 to 158 (NRTAER), and Ala-217. Shikimate is bound at residue Tyr-219. NADP(+) is bound at residue Gly-240.

Belongs to the shikimate dehydrogenase family. As to quaternary structure, homodimer.

The enzyme catalyses shikimate + NADP(+) = 3-dehydroshikimate + NADPH + H(+). Its pathway is metabolic intermediate biosynthesis; chorismate biosynthesis; chorismate from D-erythrose 4-phosphate and phosphoenolpyruvate: step 4/7. Functionally, involved in the biosynthesis of the chorismate, which leads to the biosynthesis of aromatic amino acids. Catalyzes the reversible NADPH linked reduction of 3-dehydroshikimate (DHSA) to yield shikimate (SA). The chain is Shikimate dehydrogenase (NADP(+)) from Halorubrum lacusprofundi (strain ATCC 49239 / DSM 5036 / JCM 8891 / ACAM 34).